The chain runs to 127 residues: Aspartate 1-decarboxylase (127 aa).

The Schiff-base intermediate with substrate; via pyruvic acid role is filled by S25. The residue at position 25 (S25) is a Pyruvic acid (Ser). A substrate-binding site is contributed by T57. Y58 (proton donor) is an active-site residue. 73 to 75 (GAA) contacts substrate.

The protein belongs to the PanD family. In terms of assembly, heterooctamer of four alpha and four beta subunits. The cofactor is pyruvate. In terms of processing, is synthesized initially as an inactive proenzyme, which is activated by self-cleavage at a specific serine bond to produce a beta-subunit with a hydroxyl group at its C-terminus and an alpha-subunit with a pyruvoyl group at its N-terminus.

Its subcellular location is the cytoplasm. The enzyme catalyses L-aspartate + H(+) = beta-alanine + CO2. Its pathway is cofactor biosynthesis; (R)-pantothenate biosynthesis; beta-alanine from L-aspartate: step 1/1. Its function is as follows. Catalyzes the pyruvoyl-dependent decarboxylation of aspartate to produce beta-alanine. In Bacillus cereus (strain 03BB102), this protein is Aspartate 1-decarboxylase.